The following is a 306-amino-acid chain: Flavin adenine dinucleotide synthase (306 aa).

Residues Ser59, Ile107, Gly164, 182-185, Arg190, and Arg300 contribute to the FAD site; that span reads DSNW.

The protein belongs to the PAPS reductase family. FAD1 subfamily.

The protein localises to the cytoplasm. It carries out the reaction FMN + ATP + H(+) = FAD + diphosphate. Its pathway is cofactor biosynthesis; FAD biosynthesis; FAD from FMN: step 1/1. In terms of biological role, catalyzes the adenylation of flavin mononucleotide (FMN) to form flavin adenine dinucleotide (FAD) coenzyme. The polypeptide is Flavin adenine dinucleotide synthase (Saccharomyces cerevisiae (strain ATCC 204508 / S288c) (Baker's yeast)).